A 440-amino-acid chain; its full sequence is Chromosome partition protein MukF (440 aa).

Residues 208–236 are leucine-zipper; that stretch reads LSETSGTLRELQDTLEAAGDKLQANLLRI.

Belongs to the MukF family. Interacts, and probably forms a ternary complex, with MukE and MukB via its C-terminal region. The complex formation is stimulated by calcium or magnesium. It is required for an interaction between MukE and MukB.

Its subcellular location is the cytoplasm. The protein localises to the nucleoid. In terms of biological role, involved in chromosome condensation, segregation and cell cycle progression. May participate in facilitating chromosome segregation by condensation DNA from both sides of a centrally located replisome during cell division. Not required for mini-F plasmid partitioning. Probably acts via its interaction with MukB and MukE. Overexpression results in anucleate cells. It has a calcium binding activity. This chain is Chromosome partition protein MukF, found in Serratia proteamaculans (strain 568).